Here is a 236-residue protein sequence, read N- to C-terminus: UPF0502 protein BceJ2315_62050 (236 aa).

It belongs to the UPF0502 family.

The chain is UPF0502 protein BceJ2315_62050 from Burkholderia cenocepacia (strain ATCC BAA-245 / DSM 16553 / LMG 16656 / NCTC 13227 / J2315 / CF5610) (Burkholderia cepacia (strain J2315)).